The chain runs to 497 residues: Aldehyde dehydrogenase (497 aa).

Gly-242 to Gly-247 contributes to the NAD(+) binding site. Residue Glu-265 is the Proton acceptor of the active site. Cys-299 (nucleophile) is an active-site residue.

Belongs to the aldehyde dehydrogenase family.

The catalysed reaction is an aldehyde + NAD(+) + H2O = a carboxylate + NADH + 2 H(+). It participates in alcohol metabolism; ethanol degradation; acetate from ethanol: step 2/2. This chain is Aldehyde dehydrogenase (aldA), found in Aspergillus niger.